A 31-amino-acid chain; its full sequence is Ice-structuring glycoprotein 3 (31 aa).

T3, T6, T9, T12, T15, T18, T21, T24, T27, and T30 each carry an O-linked (GalNAc...) threonine glycan.

Post-translationally, O-linked glycans consist of Gal-GalNAc disaccharides. The three proteins may differ only in the number of repeating units of -Ala-Ala-Thr-.

It is found in the secreted. In terms of biological role, antifreeze proteins lower the blood freezing point. This fish lives in antarctic waters where it experiences water temperatures near -1.9 degrees Celsius. Its blood has a freezing point of about -2.0 degrees Celsius, and 30% of the freezing-point depression is due mainly to the 3 major high molecular weight glycoproteins in the plasma. In Pagothenia borchgrevinki (Bald rockcod), this protein is Ice-structuring glycoprotein 3.